Reading from the N-terminus, the 726-residue chain is MSTPSDQHNTLSAGKCPFHQGNSNQTAGGGTSSRDWWPNQLRVELLAQHSNRTNPLGDDFNYRKAFSELDYAALKADLKALLTDSQPWWPADWGSYTGLFIRMAWHSAGTYRSADGRGGAGRGQQRFAPLNSWPDNVSLDKARRLLWPVKQKYGQKISWADLFILAGNVALENSGFRTFGFGAGREDVWEPDMDVNWGDEKNWLEHRHPESLAQAPLGATEMGLIYVNPEGPNHSGDPASAAPAIRATFGNMGMNDEETVALIAGGHTLGKTHGAAAANHVGVDPEAAPIEAQGLGWHSSFGSGAGADAITSGLEVTWTQTPTQWSNYFFENLFKYEWVQTRSPAGAIQFEAVDAPEIIPDPFDPSKKRKPTMLVTDLTLRFDPEFEKISRRFLNDPQAFNEAFARAWYKLTHRDMGPKARYIGPEVPKEDLIWQDPLPAAIYQPTQADIDSLKAEIASAGLTVSELISVAWASASTFRGGDKRGGANGARLALAPQRDWDVNASAARALATLEAIQRTANKASLADIIVLAGVVGVEQAAKAAGVEITVPFAPGRVDARQDQTDVALFEFLKPKADGFRNYRGVRSSTPTESLLIDKAQQLTLTAPELTVLVGGMRALGANYDASAHGVFTDRVGVLSTDFFVNLLDMRYEWKATDATAEVFEGRDRESGEVKYTATRADLVFGSNSVLRSFAEVYASQDAHEKFVKDFVAAWTKVMNLDRFDIQ.

A compositionally biased stretch (polar residues) spans 1-12; that stretch reads MSTPSDQHNTLS. The segment at 1–34 is disordered; sequence MSTPSDQHNTLSAGKCPFHQGNSNQTAGGGTSSR. The tryptophyl-tyrosyl-methioninium (Trp-Tyr) (with M-252) cross-link spans 105 to 226; that stretch reads WHSAGTYRSA…LGATEMGLIY (122 aa). His-106 functions as the Proton acceptor in the catalytic mechanism. The tryptophyl-tyrosyl-methioninium (Tyr-Met) (with W-105) cross-link spans 226–252; the sequence is YVNPEGPNHSGDPASAAPAIRATFGNM. Residue His-267 coordinates heme b.

It belongs to the peroxidase family. Peroxidase/catalase subfamily. Homodimer or homotetramer. The cofactor is heme b. Formation of the three residue Trp-Tyr-Met cross-link is important for the catalase, but not the peroxidase activity of the enzyme.

It carries out the reaction H2O2 + AH2 = A + 2 H2O. The enzyme catalyses 2 H2O2 = O2 + 2 H2O. Bifunctional enzyme with both catalase and broad-spectrum peroxidase activity. The chain is Catalase-peroxidase from Cronobacter sakazakii (strain ATCC BAA-894) (Enterobacter sakazakii).